Consider the following 500-residue polypeptide: NAD(P)H-quinone oxidoreductase chain 4, chloroplastic (500 aa).

14 consecutive transmembrane segments (helical) span residues 4–24, 35–55, 87–107, 113–130, 134–154, 167–187, 211–231, 242–262, 272–292, 305–325, 330–350, 386–406, 416–436, and 462–482; these read FPWLTIIVIFPISAGSLMLFL, YTICICILELLLTTYAFCYNF, IGTILLTGFITTLATLAAFPV, LFHFLMLAMYSGQIGSFS, LLLFFIMWELELIPVYLLLAM, FILYTAGSSIFLLIGVLGLSL, ILFYIGFLIAFAVKLPIIPLH, HYSTCMLLAGILLKMGAYGLV, AHSMFSPWLLVVGTIQIIYAA, IAYSSVSHMGFIIIGISSITD, GAILQIISHGFIGAALFFLAG, LALPGMSGFVAELIVFFGIIT, ILIIFVMAIGMILTPIYLLSM, and LFLSISILLPIIGIGIYPDFV.

It belongs to the complex I subunit 4 family.

The protein resides in the plastid. Its subcellular location is the chloroplast thylakoid membrane. The catalysed reaction is a plastoquinone + NADH + (n+1) H(+)(in) = a plastoquinol + NAD(+) + n H(+)(out). It catalyses the reaction a plastoquinone + NADPH + (n+1) H(+)(in) = a plastoquinol + NADP(+) + n H(+)(out). The protein is NAD(P)H-quinone oxidoreductase chain 4, chloroplastic of Lepidium virginicum (Virginia pepperweed).